Here is a 551-residue protein sequence, read N- to C-terminus: Protein GPR107 (551 aa).

The first 33 residues, 1 to 33 (MAVPVPLGRFGSFCLRLLRLLALLELLVHPVLG), serve as a signal peptide directing secretion. At 40–262 (LKDDVRHKVH…YLSAGEIPLP (223 aa)) the chain is on the extracellular side. N-linked (GlcNAc...) asparagine glycosylation is found at asparagine 64 and asparagine 209. Residues cysteine 106 and cysteine 226 are joined by a disulfide bond. A helical membrane pass occupies residues 263–283 (KLYVSMALFFFLSGTIWIHIL). Residues 284-292 (RKRRNDVFK) are Cytoplasmic-facing. Residues 293–313 (IHWLMAALPFTKSLSLVFHAI) form a helical membrane-spanning segment. Topologically, residues 314-336 (DYHYISSQGFPIEGWAVVYYITH) are extracellular. Residues 337 to 357 (LLKGALLFITIALIGTGWAFI) form a helical membrane-spanning segment. The Cytoplasmic portion of the chain corresponds to 358–367 (KHILSDKDKK). A helical transmembrane segment spans residues 368–388 (IFMIVIPLQVLANVAYIIIES). The Extracellular portion of the chain corresponds to 389–401 (TEEGTTEYGLWKD). A helical transmembrane segment spans residues 402-422 (SLFLVDLLCCGAILFPVVWSI). Residues 423–449 (RHLQEASATDGKAAINLAKLRLFRHYY) are Cytoplasmic-facing. A helical membrane pass occupies residues 450–470 (VLIVCYIYFTRIIAFLLKFAV). Residues 471–475 (PFQWK) are Extracellular-facing. A helical transmembrane segment spans residues 476–495 (WLYQLLDETATLVFFVLTGY). The Cytoplasmic portion of the chain corresponds to 496 to 551 (KFRPASDNPYLQLSQEDDDLEMESVVTTSGVMENMKKVKKVSNGAVEPQGSWEGTA). The residue at position 537 (serine 537) is a Phosphoserine.

Belongs to the LU7TM family. Cleaved by FURIN to yield two fragments that remain associated via a disulfide bond.

The protein resides in the cell membrane. The protein localises to the golgi apparatus. It is found in the trans-Golgi network membrane. Has been proposed to act as a receptor for neuronostatin, a peptide derived from the somatostatin/SST precursor. Involved in blood sugar regulation through the induction of glucagon in response to low glucose. The polypeptide is Protein GPR107 (Gpr107) (Mus musculus (Mouse)).